Reading from the N-terminus, the 68-residue chain is Protein transport protein Sec61 subunit gamma (68 aa).

At 1–32 (MDQVTKFIEPGRQFAKDSIRLVKRCTKPDRKE) the chain is on the cytoplasmic side. Residues 33 to 61 (FQKIAVATAIGFCIMGFIGFFVKLIHIPI) traverse the membrane as a helical segment. Residues 62–68 (NNIIVGS) lie on the Extracellular side of the membrane.

Belongs to the SecE/SEC61-gamma family. Heterotrimeric complex composed of SEC61-alpha, SEC61-beta and SEC61-gamma.

The protein localises to the endoplasmic reticulum membrane. In terms of biological role, necessary for protein translocation in the endoplasmic reticulum. This is Protein transport protein Sec61 subunit gamma (SEC61G) from Gryllotalpa orientalis (Oriental mole cricket).